We begin with the raw amino-acid sequence, 848 residues long: DNA mismatch repair protein MutS (848 aa).

605–612 serves as a coordination point for ATP; sequence GPNMAGKS.

It belongs to the DNA mismatch repair MutS family.

In terms of biological role, this protein is involved in the repair of mismatches in DNA. It is possible that it carries out the mismatch recognition step. This protein has a weak ATPase activity. The sequence is that of DNA mismatch repair protein MutS from Leptospira interrogans serogroup Icterohaemorrhagiae serovar copenhageni (strain Fiocruz L1-130).